The primary structure comprises 158 residues: Protein Smg homolog (158 aa).

The protein belongs to the Smg family.

In Shewanella sp. (strain ANA-3), this protein is Protein Smg homolog.